A 100-amino-acid polypeptide reads, in one-letter code: Small ribosomal subunit protein uS14c (100 aa).

The protein belongs to the universal ribosomal protein uS14 family. Part of the 30S ribosomal subunit.

The protein resides in the plastid. It localises to the chloroplast. In terms of biological role, binds 16S rRNA, required for the assembly of 30S particles. In Nephroselmis olivacea (Green alga), this protein is Small ribosomal subunit protein uS14c.